A 367-amino-acid polypeptide reads, in one-letter code: Pectate lyase 1 (367 aa).

A signal peptide spans 1–21 (MASPCLIAFLVFLCAIVSCCS). 2 cysteine pairs are disulfide-bonded: cysteine 28–cysteine 45 and cysteine 128–cysteine 147. A glycan (N-linked (GlcNAc...) asparagine) is linked at asparagine 148. Aspartate 170 is a binding site for Ca(2+). N-linked (GlcNAc...) asparagine glycosylation is present at asparagine 178. Positions 194 and 198 each coordinate Ca(2+). The active site involves arginine 250. Cysteine 306 and cysteine 312 form a disulfide bridge.

This sequence belongs to the polysaccharide lyase 1 family. Amb a subfamily. It depends on Ca(2+) as a cofactor.

The enzyme catalyses Eliminative cleavage of (1-&gt;4)-alpha-D-galacturonan to give oligosaccharides with 4-deoxy-alpha-D-galact-4-enuronosyl groups at their non-reducing ends.. It functions in the pathway glycan metabolism; pectin degradation; 2-dehydro-3-deoxy-D-gluconate from pectin: step 2/5. In terms of biological role, has pectate lyase activity. The chain is Pectate lyase 1 from Juniperus virginiana (Eastern redcedar).